A 78-amino-acid chain; its full sequence is Acyl carrier protein (78 aa).

In terms of domain architecture, Carrier spans 2 to 77 (SDTAERVKKI…DAVKYIEKAT (76 aa)). S37 carries the post-translational modification O-(pantetheine 4'-phosphoryl)serine.

The protein belongs to the acyl carrier protein (ACP) family. In terms of processing, 4'-phosphopantetheine is transferred from CoA to a specific serine of apo-ACP by AcpS. This modification is essential for activity because fatty acids are bound in thioester linkage to the sulfhydryl of the prosthetic group.

It is found in the cytoplasm. It participates in lipid metabolism; fatty acid biosynthesis. Carrier of the growing fatty acid chain in fatty acid biosynthesis. The chain is Acyl carrier protein from Chelativorans sp. (strain BNC1).